The sequence spans 353 residues: Photosystem II D2 protein (353 aa).

The residue at position 2 (Thr-2) is an N-acetylthreonine. A Phosphothreonine modification is found at Thr-2. The chain crosses the membrane as a helical span at residues 41–61 (CAYFALGGWFTGTTFVTSWYT). Chlorophyll a is bound at residue His-118. A helical transmembrane segment spans residues 125-141 (GFMLRQFELARSVQLRP). Pheophytin a is bound by residues Gln-130 and Asn-143. Residues 153–166 (VFVSVFLIYPLGQS) form a helical membrane-spanning segment. His-198 serves as a coordination point for chlorophyll a. The chain crosses the membrane as a helical span at residues 208–228 (AALLCAIHGATVENTLFEDGD). His-215 and Phe-262 together coordinate a plastoquinone. Residue His-215 participates in Fe cation binding. His-269 contacts Fe cation. The helical transmembrane segment at 279–295 (GSWMSAIGVVGLALNLR) threads the bilayer.

It belongs to the reaction center PufL/M/PsbA/D family. In terms of assembly, PSII is composed of 1 copy each of membrane proteins PsbA, PsbB, PsbC, PsbD, PsbE, PsbF, PsbH, PsbI, PsbJ, PsbK, PsbL, PsbM, PsbT, PsbX, PsbY, PsbZ, Psb30/Ycf12, at least 3 peripheral proteins of the oxygen-evolving complex and a large number of cofactors. It forms dimeric complexes. The cofactor is The D1/D2 heterodimer binds P680, chlorophylls that are the primary electron donor of PSII, and subsequent electron acceptors. It shares a non-heme iron and each subunit binds pheophytin, quinone, additional chlorophylls, carotenoids and lipids. There is also a Cl(-1) ion associated with D1 and D2, which is required for oxygen evolution. The PSII complex binds additional chlorophylls, carotenoids and specific lipids..

The protein resides in the plastid. The protein localises to the chloroplast thylakoid membrane. It catalyses the reaction 2 a plastoquinone + 4 hnu + 2 H2O = 2 a plastoquinol + O2. In terms of biological role, photosystem II (PSII) is a light-driven water:plastoquinone oxidoreductase that uses light energy to abstract electrons from H(2)O, generating O(2) and a proton gradient subsequently used for ATP formation. It consists of a core antenna complex that captures photons, and an electron transfer chain that converts photonic excitation into a charge separation. The D1/D2 (PsbA/PsbD) reaction center heterodimer binds P680, the primary electron donor of PSII as well as several subsequent electron acceptors. D2 is needed for assembly of a stable PSII complex. This chain is Photosystem II D2 protein, found in Pinus koraiensis (Korean pine).